Reading from the N-terminus, the 454-residue chain is tRNA modification GTPase MnmE (454 aa).

Residues arginine 23, glutamate 80, and lysine 120 each coordinate (6S)-5-formyl-5,6,7,8-tetrahydrofolate. In terms of domain architecture, TrmE-type G spans threonine 216 to threonine 377. A K(+)-binding site is contributed by asparagine 226. GTP is bound by residues asparagine 226–serine 231, threonine 245–threonine 251, and aspartate 270–glycine 273. Serine 230 contributes to the Mg(2+) binding site. K(+)-binding residues include threonine 245, isoleucine 247, and threonine 250. Threonine 251 is a Mg(2+) binding site. A (6S)-5-formyl-5,6,7,8-tetrahydrofolate-binding site is contributed by lysine 454.

It belongs to the TRAFAC class TrmE-Era-EngA-EngB-Septin-like GTPase superfamily. TrmE GTPase family. As to quaternary structure, homodimer. Heterotetramer of two MnmE and two MnmG subunits. Requires K(+) as cofactor.

It localises to the cytoplasm. Functionally, exhibits a very high intrinsic GTPase hydrolysis rate. Involved in the addition of a carboxymethylaminomethyl (cmnm) group at the wobble position (U34) of certain tRNAs, forming tRNA-cmnm(5)s(2)U34. This is tRNA modification GTPase MnmE from Buchnera aphidicola subsp. Cinara cedri (strain Cc).